A 353-amino-acid polypeptide reads, in one-letter code: DNA-directed RNA polymerase subunit alpha (353 aa).

The segment at 1 to 245 (MEKIQKITYK…AHFQIIGNIN (245 aa)) is alpha N-terminal domain (alpha-NTD). Residues 261-353 (EREIKSTTPI…QLNNSEEGEE (93 aa)) form an alpha C-terminal domain (alpha-CTD) region.

It belongs to the RNA polymerase alpha chain family. Homodimer. The RNAP catalytic core consists of 2 alpha, 1 beta, 1 beta' and 1 omega subunit. When a sigma factor is associated with the core the holoenzyme is formed, which can initiate transcription.

It catalyses the reaction RNA(n) + a ribonucleoside 5'-triphosphate = RNA(n+1) + diphosphate. In terms of biological role, DNA-dependent RNA polymerase catalyzes the transcription of DNA into RNA using the four ribonucleoside triphosphates as substrates. This chain is DNA-directed RNA polymerase subunit alpha, found in Mycoplasma sp.